A 257-amino-acid polypeptide reads, in one-letter code: Putative cysteine-rich repeat secretory protein 28 (257 aa).

A signal peptide spans 1-26; the sequence is MFSTFGSVPILTVVAIQLFLIRNVLS. Gnk2-homologous domains follow at residues 32–136 and 142–254; these read AYLH…TVDS and YEND…LYPF.

The protein belongs to the cysteine-rich repeat secretory protein family.

Its subcellular location is the secreted. The polypeptide is Putative cysteine-rich repeat secretory protein 28 (CRRSP28) (Arabidopsis thaliana (Mouse-ear cress)).